The sequence spans 620 residues: Ion-translocating oxidoreductase complex subunit C (620 aa).

2 consecutive 4Fe-4S ferredoxin-type domains span residues Thr366 to Tyr397 and Lys407 to Tyr436. [4Fe-4S] cluster contacts are provided by Cys377, Cys380, Cys383, Cys387, Cys416, Cys419, Cys422, and Cys426.

The protein belongs to the 4Fe4S bacterial-type ferredoxin family. RnfC subfamily. In terms of assembly, the complex is composed of six subunits: RnfA, RnfB, RnfC, RnfD, RnfE and RnfG. [4Fe-4S] cluster serves as cofactor.

Its subcellular location is the cell inner membrane. Functionally, part of a membrane-bound complex that couples electron transfer with translocation of ions across the membrane. This chain is Ion-translocating oxidoreductase complex subunit C, found in Yersinia pestis bv. Antiqua (strain Antiqua).